Here is a 154-residue protein sequence, read N- to C-terminus: Transcriptional repressor NrdR (154 aa).

The segment at 3–34 (CPFCRHPDSRVVDSREADEGQAIRRRRSCPEC) is a zinc-finger region. The region spanning 46–136 (LAVVKRSGVT…VYRGFSSAED (91 aa)) is the ATP-cone domain.

It belongs to the NrdR family. Requires Zn(2+) as cofactor.

In terms of biological role, negatively regulates transcription of bacterial ribonucleotide reductase nrd genes and operons by binding to NrdR-boxes. This Mycobacteroides abscessus (strain ATCC 19977 / DSM 44196 / CCUG 20993 / CIP 104536 / JCM 13569 / NCTC 13031 / TMC 1543 / L948) (Mycobacterium abscessus) protein is Transcriptional repressor NrdR.